Reading from the N-terminus, the 226-residue chain is RNA-binding protein 24 (226 aa).

Residues 11–88 (TKIFVGGLPY…RKANVNLAYL (78 aa)) form the RRM domain.

It localises to the nucleus. It is found in the cytoplasm. Functionally, multifunctional RNA-binding protein involved in the regulation of pre-mRNA splicing, mRNA stability and mRNA translation important for cell fate decision and differentiation. Plays a major role in pre-mRNA alternative splicing regulation. Mediates preferentially muscle-specific exon inclusion in numerous mRNAs important for striated cardiac and skeletal muscle cell differentiation. Binds to intronic splicing enhancer (ISE) composed of stretches of GU-rich motifs localized in flanking intron of exon that will be included by alternative splicing. Involved in embryonic stem cell (ESC) transition to cardiac cell differentiation by promoting pre-mRNA alternative splicing events of several pluripotency and/or differentiation genes. Plays a role in the regulation of mRNA stability and mRNA translation to which it is bound. Involved in myogenic differentiation by regulating myog levels. Binds to a huge amount of mRNAs. Required for embryonic heart development, sarcomer and M-band formation in striated muscles. The chain is RNA-binding protein 24 (rbm24) from Xenopus tropicalis (Western clawed frog).